Consider the following 288-residue polypeptide: Bifunctional protein FolD (288 aa).

NADP(+)-binding positions include 165–167 and serine 190; that span reads GRS.

The protein belongs to the tetrahydrofolate dehydrogenase/cyclohydrolase family. In terms of assembly, homodimer.

The catalysed reaction is (6R)-5,10-methylene-5,6,7,8-tetrahydrofolate + NADP(+) = (6R)-5,10-methenyltetrahydrofolate + NADPH. It catalyses the reaction (6R)-5,10-methenyltetrahydrofolate + H2O = (6R)-10-formyltetrahydrofolate + H(+). It participates in one-carbon metabolism; tetrahydrofolate interconversion. In terms of biological role, catalyzes the oxidation of 5,10-methylenetetrahydrofolate to 5,10-methenyltetrahydrofolate and then the hydrolysis of 5,10-methenyltetrahydrofolate to 10-formyltetrahydrofolate. The sequence is that of Bifunctional protein FolD from Bdellovibrio bacteriovorus (strain ATCC 15356 / DSM 50701 / NCIMB 9529 / HD100).